A 244-amino-acid polypeptide reads, in one-letter code: MVIKMSLTNKVPEKDVHDLFTRVAPHYDQMNNLISLGTQNGWRKKFFKKLKVKAGDFALDLCCGTGDLTIALAKQVGPSGNVIGLDFNQKMLDLADKKIRGQNLQKEIQLKQGDAMHLPYTDQSFDIVTIGFGLRNVPDADQVLKEIYRVLKPDGKVGILETSQPTNPIIKLGWESYFKLFPNFAKLLGANVDDYKYLSHTTAKFISATRLKEMLEQDGFKNVIITKLNLGAGAIHIGIKKKMR.

S-adenosyl-L-methionine is bound by residues Thr-65, Asp-86, and 114 to 115 (DA).

This sequence belongs to the class I-like SAM-binding methyltransferase superfamily. MenG/UbiE family.

The enzyme catalyses a 2-demethylmenaquinol + S-adenosyl-L-methionine = a menaquinol + S-adenosyl-L-homocysteine + H(+). It participates in quinol/quinone metabolism; menaquinone biosynthesis; menaquinol from 1,4-dihydroxy-2-naphthoate: step 2/2. Its function is as follows. Methyltransferase required for the conversion of demethylmenaquinol (DMKH2) to menaquinol (MKH2). The sequence is that of Demethylmenaquinone methyltransferase from Lactobacillus johnsonii (strain CNCM I-12250 / La1 / NCC 533).